Consider the following 315-residue polypeptide: MNELATPDNPLRIGTRASPLAMAQAHMAAAALIAAHGLAMAALEIVPMTATGDRIQDRALAEVGGKALWTRELDAALDAGTIDVAVHSLKDVETLRDARFFLGAMLERADPRDRLVVREGIAAQKISELPHGARLGTSSPRRAAQVRRLRPDLDTVLLRGNVATRLAKLAAGEADATLLAAAGLERLGMHDIGAVQGTELLLPAASQGAIGIECRADDAATIALLAAIDHAPTHRAVAAERALLAVLGGDCRSPVAAYAEWQADGVLRLDAEIFSEDGADHVAGHVIVTDAGVVAALGHRLLAEAPPSIRRLFAT.

Cys-251 is subject to S-(dipyrrolylmethanemethyl)cysteine.

This sequence belongs to the HMBS family. As to quaternary structure, monomer. The cofactor is dipyrromethane.

It carries out the reaction 4 porphobilinogen + H2O = hydroxymethylbilane + 4 NH4(+). The protein operates within porphyrin-containing compound metabolism; protoporphyrin-IX biosynthesis; coproporphyrinogen-III from 5-aminolevulinate: step 2/4. Its function is as follows. Tetrapolymerization of the monopyrrole PBG into the hydroxymethylbilane pre-uroporphyrinogen in several discrete steps. This Sphingopyxis alaskensis (strain DSM 13593 / LMG 18877 / RB2256) (Sphingomonas alaskensis) protein is Porphobilinogen deaminase.